Reading from the N-terminus, the 376-residue chain is Probable plastid-lipid-associated protein 3, chloroplastic (376 aa).

The N-terminal 53 residues, methionine 1–arginine 53, are a transit peptide targeting the chloroplast. The tract at residues serine 54–valine 146 is disordered. The segment covering proline 85–valine 96 has biased composition (polar residues). A compositionally biased stretch (basic and acidic residues) spans methionine 117 to aspartate 126.

It belongs to the PAP/fibrillin family.

It localises to the plastid. Its subcellular location is the chloroplast. The protein localises to the plastoglobule. Functionally, probably involved in light/cold stress-related jasmonate (JA) biosynthesis. This is Probable plastid-lipid-associated protein 3, chloroplastic (PAP3) from Arabidopsis thaliana (Mouse-ear cress).